The primary structure comprises 717 residues: Cleavage stimulation factor subunit 3 (717 aa).

The residue at position 2 (serine 2) is an N-acetylserine. 9 HAT repeats span residues 45–77 (QPID…AEIK), 79–110 (KNYD…YVRE), 117–152 (SYKE…FLKG), 163–196 (QRIT…YEEG), 221–261 (KEYE…WEKS), 271–303 (LITK…YLEQ), 319–352 (LFSD…YEES), 354–387 (MKYE…FARR), and 458–494 (NEDN…FESN). Residues 684-705 (VKRPNEDSDEDEEKGAVVPPVH) form a disordered region. Serine 691 bears the Phosphoserine mark.

Homodimer. The CSTF complex is composed of CSTF1 (50 kDa subunit), CSTF2 (64 kDa subunit) and CSTF3 (77 kDa subunit). CSTF3 directly interacts with CSTF1 and CSTF2. Interacts with FIP1L1.

It localises to the nucleus. Functionally, one of the multiple factors required for polyadenylation and 3'-end cleavage of mammalian pre-mRNAs. The polypeptide is Cleavage stimulation factor subunit 3 (CSTF3) (Pongo abelii (Sumatran orangutan)).